Reading from the N-terminus, the 359-residue chain is Fructose-bisphosphate aldolase, cytoplasmic isozyme (359 aa).

Substrate contacts are provided by R52 and K142. E184 functions as the Proton acceptor in the catalytic mechanism. The active-site Schiff-base intermediate with dihydroxyacetone-P is the K226.

The protein belongs to the class I fructose-bisphosphate aldolase family.

It localises to the cytoplasm. It carries out the reaction beta-D-fructose 1,6-bisphosphate = D-glyceraldehyde 3-phosphate + dihydroxyacetone phosphate. Its pathway is carbohydrate degradation; glycolysis; D-glyceraldehyde 3-phosphate and glycerone phosphate from D-glucose: step 4/4. The sequence is that of Fructose-bisphosphate aldolase, cytoplasmic isozyme (ALDC) from Cicer arietinum (Chickpea).